Here is a 441-residue protein sequence, read N- to C-terminus: Cysteine--tRNA ligase (441 aa).

Cys-24 lines the Zn(2+) pocket. Positions 26–36 (PTVYNYIHIGN) match the 'HIGH' region motif. Zn(2+) is bound by residues Cys-204, His-230, and Glu-234. Positions 262–266 (KMSKS) match the 'KMSKS' region motif. Lys-265 contacts ATP.

It belongs to the class-I aminoacyl-tRNA synthetase family. As to quaternary structure, monomer. Zn(2+) is required as a cofactor.

The protein resides in the cytoplasm. The enzyme catalyses tRNA(Cys) + L-cysteine + ATP = L-cysteinyl-tRNA(Cys) + AMP + diphosphate. The polypeptide is Cysteine--tRNA ligase (Mycoplasma mycoides subsp. mycoides SC (strain CCUG 32753 / NCTC 10114 / PG1)).